A 593-amino-acid chain; its full sequence is NADH-quinone oxidoreductase subunit C/D (593 aa).

Positions 1–184 are NADH dehydrogenase I subunit C; sequence MTADNALYIP…DPYSLTLAKQ (184 aa). An NADH dehydrogenase I subunit D region spans residues 208 to 593; that stretch reads DYMFLNLGPN…IDFVMADVDR (386 aa).

In the N-terminal section; belongs to the complex I 30 kDa subunit family. The protein in the C-terminal section; belongs to the complex I 49 kDa subunit family. As to quaternary structure, NDH-1 is composed of 13 different subunits. Subunits NuoB, CD, E, F, and G constitute the peripheral sector of the complex.

It is found in the cell inner membrane. The catalysed reaction is a quinone + NADH + 5 H(+)(in) = a quinol + NAD(+) + 4 H(+)(out). In terms of biological role, NDH-1 shuttles electrons from NADH, via FMN and iron-sulfur (Fe-S) centers, to quinones in the respiratory chain. The immediate electron acceptor for the enzyme in this species is believed to be ubiquinone. Couples the redox reaction to proton translocation (for every two electrons transferred, four hydrogen ions are translocated across the cytoplasmic membrane), and thus conserves the redox energy in a proton gradient. The sequence is that of NADH-quinone oxidoreductase subunit C/D from Pseudomonas syringae pv. syringae (strain B728a).